Consider the following 460-residue polypeptide: Cation efflux system protein CusC (460 aa).

An N-terminal signal peptide occupies residues 1 to 17 (MSPCKLLPFCVALALTG). Cys18 carries N-palmitoyl cysteine lipidation. Cys18 carries S-diacylglycerol cysteine lipidation.

The protein belongs to the outer membrane factor (OMF) (TC 1.B.17) family. In terms of assembly, homotrimer. Component of the cus efflux system composed of CusA, CusB, CusC and CusF.

Its subcellular location is the cell outer membrane. Functionally, forms pores that allow passive diffusion of cations across the outer membrane. Part of a cation efflux system that mediates resistance to copper and silver. The polypeptide is Cation efflux system protein CusC (cusC) (Escherichia coli O6:H1 (strain CFT073 / ATCC 700928 / UPEC)).